The chain runs to 459 residues: Bifunctional protein GlmU (459 aa).

The interval 1–229 is pyrophosphorylase; the sequence is MTNYAIILAA…FDESLGVNDR (229 aa). Residues 8–11, Lys-22, Gln-72, and 77–78 each bind UDP-N-acetyl-alpha-D-glucosamine; these read LAAG and GT. Asp-102 lines the Mg(2+) pocket. 4 residues coordinate UDP-N-acetyl-alpha-D-glucosamine: Gly-139, Glu-154, Asn-169, and Asn-227. Asn-227 contacts Mg(2+). A linker region spans residues 230–250; the sequence is VALATAESVMRRRINQQHMVN. The segment at 251 to 459 is N-acetyltransferase; sequence GVSFVNPHAT…KRLPHHPQNK (209 aa). The UDP-N-acetyl-alpha-D-glucosamine site is built by Arg-332 and Lys-350. The Proton acceptor role is filled by His-362. Residues Tyr-365 and Asn-376 each coordinate UDP-N-acetyl-alpha-D-glucosamine. Acetyl-CoA contacts are provided by residues Ala-379, 385 to 386, Ser-404, Ala-422, and Arg-439; that span reads NY.

The protein in the N-terminal section; belongs to the N-acetylglucosamine-1-phosphate uridyltransferase family. It in the C-terminal section; belongs to the transferase hexapeptide repeat family. In terms of assembly, homotrimer. It depends on Mg(2+) as a cofactor.

Its subcellular location is the cytoplasm. The catalysed reaction is alpha-D-glucosamine 1-phosphate + acetyl-CoA = N-acetyl-alpha-D-glucosamine 1-phosphate + CoA + H(+). It catalyses the reaction N-acetyl-alpha-D-glucosamine 1-phosphate + UTP + H(+) = UDP-N-acetyl-alpha-D-glucosamine + diphosphate. The protein operates within nucleotide-sugar biosynthesis; UDP-N-acetyl-alpha-D-glucosamine biosynthesis; N-acetyl-alpha-D-glucosamine 1-phosphate from alpha-D-glucosamine 6-phosphate (route II): step 2/2. It functions in the pathway nucleotide-sugar biosynthesis; UDP-N-acetyl-alpha-D-glucosamine biosynthesis; UDP-N-acetyl-alpha-D-glucosamine from N-acetyl-alpha-D-glucosamine 1-phosphate: step 1/1. It participates in bacterial outer membrane biogenesis; LPS lipid A biosynthesis. Catalyzes the last two sequential reactions in the de novo biosynthetic pathway for UDP-N-acetylglucosamine (UDP-GlcNAc). The C-terminal domain catalyzes the transfer of acetyl group from acetyl coenzyme A to glucosamine-1-phosphate (GlcN-1-P) to produce N-acetylglucosamine-1-phosphate (GlcNAc-1-P), which is converted into UDP-GlcNAc by the transfer of uridine 5-monophosphate (from uridine 5-triphosphate), a reaction catalyzed by the N-terminal domain. In Streptococcus sanguinis (strain SK36), this protein is Bifunctional protein GlmU.